The sequence spans 217 residues: Large ribosomal subunit protein bL25 (217 aa).

Residues 178 to 217 (VVAPTEEPTEEEIEAMEGEQQTEEPEVVGESKEDEEKTEE) are disordered. Acidic residues predominate over residues 184-205 (EPTEEEIEAMEGEQQTEEPEVV). The segment covering 206–217 (GESKEDEEKTEE) has biased composition (basic and acidic residues).

This sequence belongs to the bacterial ribosomal protein bL25 family. CTC subfamily. In terms of assembly, part of the 50S ribosomal subunit; part of the 5S rRNA/L5/L18/L25 subcomplex. Contacts the 5S rRNA. Binds to the 5S rRNA independently of L5 and L18.

Functionally, this is one of the proteins that binds to the 5S RNA in the ribosome where it forms part of the central protuberance. The sequence is that of Large ribosomal subunit protein bL25 from Staphylococcus aureus (strain USA300).